The following is a 561-amino-acid chain: Putative transport protein YbjL (561 aa).

Helical transmembrane passes span 8-28 (LLNG…LCLG), 32-52 (LGSI…LLGQ), 66-86 (FMLF…SIFF), 94-114 (MLAL…GKLF), and 158-178 (NLSL…IVGA). RCK C-terminal domains lie at 200 to 288 (RGLD…SFRN) and 292 to 373 (VFDR…RIGF). 6 consecutive transmembrane segments (helical) span residues 383–403 (LLAF…TFQF), 406–426 (FSFG…LGFM), 451–471 (VFMA…LGAI), 475–495 (MLIA…LFGA), 503–523 (ALLF…EIIS), and 540–560 (AIAN…CPGL).

It belongs to the AAE transporter (TC 2.A.81) family. YbjL subfamily.

It localises to the cell membrane. In Shigella dysenteriae serotype 1 (strain Sd197), this protein is Putative transport protein YbjL.